The chain runs to 194 residues: Small ribosomal subunit protein uS7 (194 aa).

Belongs to the universal ribosomal protein uS7 family. As to quaternary structure, part of the 30S ribosomal subunit.

One of the primary rRNA binding proteins, it binds directly to 16S rRNA where it nucleates assembly of the head domain of the 30S subunit. Is located at the subunit interface close to the decoding center. This is Small ribosomal subunit protein uS7 from Archaeoglobus fulgidus (strain ATCC 49558 / DSM 4304 / JCM 9628 / NBRC 100126 / VC-16).